The chain runs to 130 residues: ATP synthase epsilon chain (130 aa).

Belongs to the ATPase epsilon chain family. As to quaternary structure, F-type ATPases have 2 components, CF(1) - the catalytic core - and CF(0) - the membrane proton channel. CF(1) has five subunits: alpha(3), beta(3), gamma(1), delta(1), epsilon(1). CF(0) has three main subunits: a, b and c.

The protein resides in the cell inner membrane. In terms of biological role, produces ATP from ADP in the presence of a proton gradient across the membrane. The protein is ATP synthase epsilon chain of Campylobacter lari (strain RM2100 / D67 / ATCC BAA-1060).